Here is a 107-residue protein sequence, read N- to C-terminus: UPF0145 protein BVU_2335 (107 aa).

This sequence belongs to the UPF0145 family.

This chain is UPF0145 protein BVU_2335, found in Phocaeicola vulgatus (strain ATCC 8482 / DSM 1447 / JCM 5826 / CCUG 4940 / NBRC 14291 / NCTC 11154) (Bacteroides vulgatus).